Consider the following 416-residue polypeptide: Antigen EG13 (416 aa).

An F-BAR domain is found at Met1–Asp247. Residues Leu297 to Thr327 are disordered. The span at Thr312–Thr327 shows a compositional bias: polar residues. In terms of domain architecture, SH3 spans Arg361–Arg416.

The polypeptide is Antigen EG13 (EG13) (Echinococcus granulosus (Hydatid tapeworm)).